Consider the following 116-residue polypeptide: Iron-sulfur cluster insertion protein ErpA (116 aa).

Iron-sulfur cluster-binding residues include Cys-44, Cys-108, and Cys-110.

It belongs to the HesB/IscA family. In terms of assembly, homodimer. Requires iron-sulfur cluster as cofactor.

Its function is as follows. Required for insertion of 4Fe-4S clusters for at least IspG. The chain is Iron-sulfur cluster insertion protein ErpA from Shewanella halifaxensis (strain HAW-EB4).